The sequence spans 512 residues: Maturase K (512 aa).

Belongs to the intron maturase 2 family. MatK subfamily.

The protein resides in the plastid. Its subcellular location is the chloroplast. Usually encoded in the trnK tRNA gene intron. Probably assists in splicing its own and other chloroplast group II introns. This Wolffiella gladiata (Florida mud-midget) protein is Maturase K.